A 538-amino-acid polypeptide reads, in one-letter code: Methionine--tRNA ligase (538 aa).

Residues 21 to 31 carry the 'HIGH' region motif; sequence YYVNDAPHLGH. Positions 137, 140, 162, and 165 each coordinate Zn(2+). The short motif at 313–317 is the 'KMSKS' region element; that stretch reads KMSKS. K316 serves as a coordination point for ATP.

This sequence belongs to the class-I aminoacyl-tRNA synthetase family. MetG type 2A subfamily. As to quaternary structure, monomer. Requires Zn(2+) as cofactor.

The protein resides in the cytoplasm. It carries out the reaction tRNA(Met) + L-methionine + ATP = L-methionyl-tRNA(Met) + AMP + diphosphate. Is required not only for elongation of protein synthesis but also for the initiation of all mRNA translation through initiator tRNA(fMet) aminoacylation. The polypeptide is Methionine--tRNA ligase (Streptomyces coelicolor (strain ATCC BAA-471 / A3(2) / M145)).